The chain runs to 462 residues: BPI fold-containing family B member 2 (462 aa).

The N-terminal stretch at 1–22 (MARACSLGLLLLLLLLLRTVVT) is a signal peptide. The residue at position 55 (threonine 55) is a Phosphothreonine. Serine 63 is modified (phosphoserine). A glycan (N-linked (GlcNAc...) asparagine) is linked at asparagine 99. The cysteines at positions 140 and 177 are disulfide-linked. N-linked (GlcNAc...) asparagine glycans are attached at residues asparagine 297 and asparagine 336.

This sequence belongs to the BPI/LBP/Plunc superfamily. BPI/LBP family.

The protein localises to the secreted. This chain is BPI fold-containing family B member 2 (Bpifb2), found in Mus musculus (Mouse).